Here is a 278-residue protein sequence, read N- to C-terminus: Thiazole synthase (278 aa).

Lysine 109 serves as the catalytic Schiff-base intermediate with DXP. 1-deoxy-D-xylulose 5-phosphate contacts are provided by residues glycine 170, 197 to 198 (AG), and 219 to 220 (NT).

The protein belongs to the ThiG family. As to quaternary structure, homotetramer. Forms heterodimers with either ThiH or ThiS.

It is found in the cytoplasm. It carries out the reaction [ThiS sulfur-carrier protein]-C-terminal-Gly-aminoethanethioate + 2-iminoacetate + 1-deoxy-D-xylulose 5-phosphate = [ThiS sulfur-carrier protein]-C-terminal Gly-Gly + 2-[(2R,5Z)-2-carboxy-4-methylthiazol-5(2H)-ylidene]ethyl phosphate + 2 H2O + H(+). It functions in the pathway cofactor biosynthesis; thiamine diphosphate biosynthesis. Catalyzes the rearrangement of 1-deoxy-D-xylulose 5-phosphate (DXP) to produce the thiazole phosphate moiety of thiamine. Sulfur is provided by the thiocarboxylate moiety of the carrier protein ThiS. In vitro, sulfur can be provided by H(2)S. In Cupriavidus necator (strain ATCC 17699 / DSM 428 / KCTC 22496 / NCIMB 10442 / H16 / Stanier 337) (Ralstonia eutropha), this protein is Thiazole synthase.